The chain runs to 991 residues: Translation initiation factor IF-2 (991 aa).

2 disordered regions span residues 126-220 (QADH…DVGE) and 325-359 (VKAA…VDEK). Polar residues-rich tracts occupy residues 138 to 160 (QTES…TEPA) and 201 to 210 (PAAQTESAVQ). Positions 326 to 340 (KAAGDGDTAPAADDA) are enriched in low complexity. A compositionally biased stretch (basic residues) spans 343 to 353 (GKKKPGKKKKK). The 171-residue stretch at 488–658 (IRPPVVTIMG…LTEAEIRELK (171 aa)) folds into the tr-type G domain. Residues 497 to 504 (GHVDHGKT) form a G1 region. 497-504 (GHVDHGKT) lines the GTP pocket. The G2 stretch occupies residues 522-526 (GITQH). The segment at 544–547 (DTPG) is G3. GTP contacts are provided by residues 544–548 (DTPGH) and 598–601 (NKID). The interval 598-601 (NKID) is G4. The interval 634 to 636 (SAK) is G5.

Belongs to the TRAFAC class translation factor GTPase superfamily. Classic translation factor GTPase family. IF-2 subfamily.

Its subcellular location is the cytoplasm. Its function is as follows. One of the essential components for the initiation of protein synthesis. Protects formylmethionyl-tRNA from spontaneous hydrolysis and promotes its binding to the 30S ribosomal subunits. Also involved in the hydrolysis of GTP during the formation of the 70S ribosomal complex. The protein is Translation initiation factor IF-2 of Chlorobium phaeobacteroides (strain DSM 266 / SMG 266 / 2430).